We begin with the raw amino-acid sequence, 369 residues long: Phospho-N-acetylmuramoyl-pentapeptide-transferase (369 aa).

10 helical membrane passes run 2-22, 54-74, 80-100, 113-133, 158-178, 195-215, 241-261, 268-288, 293-313, and 347-367; these read IAILLAVAFGITFTLFTTPFF, GLVIVVASIISYFLANFFLGL, GLLVIFMFVGMSLVGFLDDIL, FYKVVLQSFIAVPFALLTFLV, ALFSLGIIGVFSAWVLYLLWI, LDGLAAGAMIFTMLAYVVIGF, PLDMSILAAAILGSLLGFLWW, IMMGDTGALALGGAAAALSIL, LLFLVLGGLFVIEAGSVILQI, and FWIIAGLFTALGIGLFYADWL.

The protein belongs to the glycosyltransferase 4 family. MraY subfamily. The cofactor is Mg(2+).

It is found in the cell membrane. It carries out the reaction UDP-N-acetyl-alpha-D-muramoyl-L-alanyl-gamma-D-glutamyl-meso-2,6-diaminopimeloyl-D-alanyl-D-alanine + di-trans,octa-cis-undecaprenyl phosphate = di-trans,octa-cis-undecaprenyl diphospho-N-acetyl-alpha-D-muramoyl-L-alanyl-D-glutamyl-meso-2,6-diaminopimeloyl-D-alanyl-D-alanine + UMP. Its pathway is cell wall biogenesis; peptidoglycan biosynthesis. Its function is as follows. Catalyzes the initial step of the lipid cycle reactions in the biosynthesis of the cell wall peptidoglycan: transfers peptidoglycan precursor phospho-MurNAc-pentapeptide from UDP-MurNAc-pentapeptide onto the lipid carrier undecaprenyl phosphate, yielding undecaprenyl-pyrophosphoryl-MurNAc-pentapeptide, known as lipid I. In Tropheryma whipplei (strain TW08/27) (Whipple's bacillus), this protein is Phospho-N-acetylmuramoyl-pentapeptide-transferase.